The chain runs to 122 residues: Proteasome assembly chaperone 3 (122 aa).

Met-1 is subject to N-acetylmethionine.

This sequence belongs to the PSMG3 family. In terms of assembly, homodimer. Interacts with PSMG4. Interacts directly with alpha and beta subunits of the 20S proteasome but dissociates before the formation of half-proteasomes, probably upon recruitment of POMP.

In terms of biological role, chaperone protein which promotes assembly of the 20S proteasome. May cooperate with PSMG1-PSMG2 heterodimers to orchestrate the correct assembly of proteasomes. The protein is Proteasome assembly chaperone 3 of Homo sapiens (Human).